A 45-amino-acid polypeptide reads, in one-letter code: Photosystem II reaction center protein K (45 aa).

The propeptide occupies 1-8; that stretch reads MITAIIIA. A helical transmembrane segment spans residues 23-43; that stretch reads ILPVIPIFFLLLAFVWQAAIG.

The protein belongs to the PsbK family. In terms of assembly, PSII is composed of 1 copy each of membrane proteins PsbA, PsbB, PsbC, PsbD, PsbE, PsbF, PsbH, PsbI, PsbJ, PsbK, PsbL, PsbM, PsbT, PsbX, PsbY, PsbZ, Psb30/Ycf12, at least 3 peripheral proteins of the oxygen-evolving complex and a large number of cofactors. It forms dimeric complexes.

It localises to the plastid. Its subcellular location is the chloroplast thylakoid membrane. One of the components of the core complex of photosystem II (PSII). PSII is a light-driven water:plastoquinone oxidoreductase that uses light energy to abstract electrons from H(2)O, generating O(2) and a proton gradient subsequently used for ATP formation. It consists of a core antenna complex that captures photons, and an electron transfer chain that converts photonic excitation into a charge separation. This chain is Photosystem II reaction center protein K, found in Gracilaria tenuistipitata var. liui (Red alga).